The following is a 134-amino-acid chain: Glycine cleavage system H protein (134 aa).

The Lipoyl-binding domain maps to 24–106 (TVRVGITDYA…YGAGWLLDIQ (83 aa)). Lys65 bears the N6-lipoyllysine mark.

This sequence belongs to the GcvH family. In terms of assembly, the glycine cleavage system is composed of four proteins: P, T, L and H. It depends on (R)-lipoate as a cofactor.

In terms of biological role, the glycine cleavage system catalyzes the degradation of glycine. The H protein shuttles the methylamine group of glycine from the P protein to the T protein. The protein is Glycine cleavage system H protein of Mycobacterium tuberculosis (strain ATCC 25177 / H37Ra).